A 613-amino-acid chain; its full sequence is Dihydroxy-acid dehydratase (613 aa).

Mg(2+) is bound at residue aspartate 81. Position 122 (cysteine 122) interacts with [2Fe-2S] cluster. The Mg(2+) site is built by aspartate 123 and lysine 124. Residue lysine 124 is modified to N6-carboxylysine. Cysteine 195 serves as a coordination point for [2Fe-2S] cluster. Mg(2+) is bound at residue glutamate 491. The Proton acceptor role is filled by serine 517.

Belongs to the IlvD/Edd family. Homodimer. [2Fe-2S] cluster is required as a cofactor. Requires Mg(2+) as cofactor.

The enzyme catalyses (2R)-2,3-dihydroxy-3-methylbutanoate = 3-methyl-2-oxobutanoate + H2O. It catalyses the reaction (2R,3R)-2,3-dihydroxy-3-methylpentanoate = (S)-3-methyl-2-oxopentanoate + H2O. It participates in amino-acid biosynthesis; L-isoleucine biosynthesis; L-isoleucine from 2-oxobutanoate: step 3/4. Its pathway is amino-acid biosynthesis; L-valine biosynthesis; L-valine from pyruvate: step 3/4. Functionally, functions in the biosynthesis of branched-chain amino acids. Catalyzes the dehydration of (2R,3R)-2,3-dihydroxy-3-methylpentanoate (2,3-dihydroxy-3-methylvalerate) into 2-oxo-3-methylpentanoate (2-oxo-3-methylvalerate) and of (2R)-2,3-dihydroxy-3-methylbutanoate (2,3-dihydroxyisovalerate) into 2-oxo-3-methylbutanoate (2-oxoisovalerate), the penultimate precursor to L-isoleucine and L-valine, respectively. This chain is Dihydroxy-acid dehydratase, found in Buchnera aphidicola subsp. Schlechtendalia chinensis.